The primary structure comprises 86 residues: Acyl-CoA-binding protein homolog (86 aa).

In terms of domain architecture, ACB spans 2–86; sequence VSEQFNAAAE…FVEGLVAKYA (85 aa). An acyl-CoA is bound by residues Lys-14, 29–33, Lys-51, Lys-55, and Tyr-74; that span reads YALFK.

The protein belongs to the ACBP family. Expressed in larval and pupal brains. In adults, expressed in cardia, part of the Malpighian tubules, fat body, and gametes of both sexes.

Functionally, binds medium- and long-chain acyl-CoA esters with very high affinity and may function as an intracellular carrier of acyl-CoA esters. May be involved in energy metabolism in a manner that depends on the substrate used for energy production. Dbi and its metabolites are involved in the regulation of multiple biological processes. In Drosophila melanogaster (Fruit fly), this protein is Acyl-CoA-binding protein homolog.